We begin with the raw amino-acid sequence, 480 residues long: Probable E3 ubiquitin protein ligase DRIPH (480 aa).

The RING-type zinc finger occupies 16 to 57; that stretch reads CPICTNPFKDATTISECLHTFCRSCIRNKFINERVNACPVCN. Disordered regions lie at residues 93-133, 167-193, 241-261, and 280-356; these read GPKT…EPAN, RGRK…PKIK, TPPD…ESVE, and VNQN…EMKV. Residues 103–112 are compositionally biased toward basic residues; sequence SSKKKRKSRT. Residues 113-133 show a composition bias toward low complexity; the sequence is SLRVSSSRVSSSPDTPLEPAN. Residues 175–193 show a composition bias toward basic and acidic residues; it reads KKIDSKPEPELPPKEPKIK. Positions 246–260 are enriched in acidic residues; that stretch reads VEPEISSDDDTEESV. Positions 298 to 309 are enriched in polar residues; that stretch reads GQKLKTNGAATS.

It catalyses the reaction S-ubiquitinyl-[E2 ubiquitin-conjugating enzyme]-L-cysteine + [acceptor protein]-L-lysine = [E2 ubiquitin-conjugating enzyme]-L-cysteine + N(6)-ubiquitinyl-[acceptor protein]-L-lysine.. The protein operates within protein modification; protein ubiquitination. The chain is Probable E3 ubiquitin protein ligase DRIPH from Arabidopsis thaliana (Mouse-ear cress).